A 187-amino-acid chain; its full sequence is MKKDTGFDSKIEKLARTTASKTGRRGFIGRLGGFLVGSALLPLLPVDRRSRLGGEVQAATTGNLTRSGFKPQDKDPKACEYWRHCTIDGNLCDCCGGTLTSCPPGSSLSPSSWVASCYNPGDQQTYLIAYRDCCGKQTCGRCNCVNTQGELPVYRPEFNNDIVWCFGADNDAMTYHCTISPIVGKAS.

Residues 1-57 (MKKDTGFDSKIEKLARTTASKTGRRGFIGRLGGFLVGSALLPLLPVDRRSRLGGEVQ) constitute a signal peptide (tat-type signal). 6 cysteine pairs are disulfide-bonded: Cys-79–Cys-144, Cys-85–Cys-117, Cys-92–Cys-177, Cys-94–Cys-142, Cys-102–Cys-133, and Cys-134–Cys-165. Residue Trp-113 is modified to Tryptophylquinone. A cross-link (tryptophan tryptophylquinone (Trp-Trp)) is located at residues 113-164 (WVASCYNPGDQQTYLIAYRDCCGKQTCGRCNCVNTQGELPVYRPEFNNDIVW).

This sequence belongs to the aromatic amine dehydrogenase light chain family. As to quaternary structure, heterotetramer of two light and two heavy chains. Tryptophan tryptophylquinone residue is required as a cofactor. Predicted to be exported by the Tat system. The position of the signal peptide cleavage has not been experimentally proven. Post-translationally, tryptophan tryptophylquinone (TTQ) is formed by oxidation of the indole ring of a tryptophan to form tryptophylquinone followed by covalent cross-linking with another tryptophan residue.

It is found in the periplasm. The enzyme catalyses 2 oxidized [amicyanin] + methylamine + H2O = 2 reduced [amicyanin] + formaldehyde + NH4(+) + 2 H(+). The protein operates within one-carbon metabolism; methylamine degradation; formaldehyde from methylamine: step 1/1. In terms of biological role, methylamine dehydrogenase carries out the oxidation of methylamine. Electrons are passed from methylamine dehydrogenase to amicyanin. In Methylophilus methylotrophus (Bacterium W3A1), this protein is Methylamine dehydrogenase light chain (mauA).